We begin with the raw amino-acid sequence, 391 residues long: NADH-quinone oxidoreductase subunit D (391 aa).

It belongs to the complex I 49 kDa subunit family. NDH-1 is composed of 14 different subunits. Subunits NuoB, C, D, E, F, and G constitute the peripheral sector of the complex.

It is found in the cell inner membrane. It carries out the reaction a quinone + NADH + 5 H(+)(in) = a quinol + NAD(+) + 4 H(+)(out). NDH-1 shuttles electrons from NADH, via FMN and iron-sulfur (Fe-S) centers, to quinones in the respiratory chain. The immediate electron acceptor for the enzyme in this species is believed to be ubiquinone. Couples the redox reaction to proton translocation (for every two electrons transferred, four hydrogen ions are translocated across the cytoplasmic membrane), and thus conserves the redox energy in a proton gradient. In Rickettsia akari (strain Hartford), this protein is NADH-quinone oxidoreductase subunit D.